The following is a 645-amino-acid chain: Protein hrpC2 (645 aa).

7 consecutive transmembrane segments (helical) span residues 18–34 (VAIA…MILP), 43–59 (LLGI…MVTM), 108–124 (LVVG…FLII), 201–217 (IAGL…GIVV), 243–259 (VSQI…GVMI), 285–301 (ARAL…FAFV), and 308–324 (LFLL…YTIW). The tract at residues 334 to 354 (DQRKLPSASRKGAKGEAPHIR) is disordered.

It belongs to the FHIPEP (flagella/HR/invasion proteins export pore) family.

It is found in the cell inner membrane. Functionally, involved in the secretion of a proteinaceous elicitor of the hypersensitivity response in plants. This Xanthomonas euvesicatoria protein is Protein hrpC2 (hrpC2).